The primary structure comprises 229 residues: ATPase SWSAP1 (229 aa).

The segment at 209-229 (PWPTQAGDPSSGKGSSSGGQP) is disordered.

In terms of assembly, interacts with ZSWIM7; they form a functional complex involved in homologous recombination repair and stabilize each other. Interacts with RAD51, RAD51B, RAD51C, RAD51D and XRCC3; involved in homologous recombination repair.

Its subcellular location is the nucleus. Functionally, ATPase which is preferentially stimulated by single-stranded DNA and is involved in homologous recombination repair (HRR). Has a DNA-binding activity which is independent of its ATPase activity. This is ATPase SWSAP1 (SWSAP1) from Homo sapiens (Human).